Here is a 95-residue protein sequence, read N- to C-terminus: MRMIKPGEEVIFTVPIRKVKKIVPRWKRAPRAVKFVREFIARHAKAQEVIISTKVNEKIWERGIEKPPSKLRVKVRVEEEEREGGKVRIAYVDLA.

The protein belongs to the eukaryotic ribosomal protein eL31 family.

The sequence is that of Large ribosomal subunit protein eL31 (rpl31e) from Pyrococcus horikoshii (strain ATCC 700860 / DSM 12428 / JCM 9974 / NBRC 100139 / OT-3).